The chain runs to 235 residues: Small ribosomal subunit protein uS2c (235 aa).

It belongs to the universal ribosomal protein uS2 family.

The protein localises to the plastid. It localises to the chloroplast. The sequence is that of Small ribosomal subunit protein uS2c (rps2) from Guillardia theta (Cryptophyte).